Consider the following 334-residue polypeptide: Serpentine receptor class alpha-11 (334 aa).

Residues 1 to 23 (MTTNNPVCASDAHMEMYSSKLYT) lie on the Extracellular side of the membrane. Residues 24-44 (SALFLNLIIATTSMILTGFAI) form a helical membrane-spanning segment. Topologically, residues 45–57 (QKLFMESIINIST) are cytoplasmic. Residues 58-80 (RMFLFCGLMCCSLHQTAYIVLRI) traverse the membrane as a helical segment. The Extracellular portion of the chain corresponds to 81–105 (QVIYQVFFKLSEPCNLYYPAIDCKY). Residues 106 to 126 (VTFSLVAGNTGMIFIQSAMTI) traverse the membrane as a helical segment. Over 127-145 (DRIFATIFPKLWPKLKYWP) the chain is Cytoplasmic. Residues 146–166 (GVVLSILMIACNYANVQIIFW) form a helical membrane-spanning segment. At 167 to 191 (GDPLTEYVPTCGQFPSKSVNRFQTF) the chain is on the extracellular side. A helical transmembrane segment spans residues 192 to 212 (LAIALYMSIAHMVINVIILYI). Topologically, residues 213–239 (NVLQDRQQSKSFNVNQRYQSREALKSS) are cytoplasmic. The chain crosses the membrane as a helical span at residues 240–260 (QAIFFLSMSQFFACLIYSVFT). Topologically, residues 261 to 277 (KVFLEFQLNLSPLQSGL) are extracellular. A helical transmembrane segment spans residues 278–298 (VLALSYTTPYACIAIPSLIIF). Topologically, residues 299–334 (TFRFIKNQRLRNINELRSQTETGDECMRKIAKIWEK) are cytoplasmic.

Belongs to the nematode receptor-like protein sra family. As to expression, expressed in interneurons AIY and AVB in L1 larvae. In adults, strong expression is seen in AIY and AIA but only weak expression in AVB.

The protein resides in the membrane. Its function is as follows. A G protein-coupled receptor required for olfactory imprinting a requisite in ordorant response such as benzaldehyde and isoamylalcohol. The sequence is that of Serpentine receptor class alpha-11 (sra-11) from Caenorhabditis elegans.